The following is a 360-amino-acid chain: MAPLGTTVLLWSLLRSSPGVERVCFRARIQPWHGGLLQPLPCSFEMGLPRRRFSSEAAESGSPETKKPTFMDEEVQSILTKMTGLNLQKTFKPAIQELKPPTYKLMTQAQLEEATRQAVEAAKVRLKMPPVLEERVPINDVLAEDKILEGTETTKYVFTDISYSIPHRERFIVVREPSGTLRKASWEERDRMIQVYFPKEGRKILTPIIFKEENLRTMYSQDRHVDVLNLCFAQFEPDSTEYIKVHHKTYEDIDKRGKYDLLRSTRYFGGMVWYFVNNKKIDGLLIDQIQRDLIDDATNLVQLYHVLHPDGQSAQGAKDQAAEGINLIKVFAKTEAQKGAYIELTLQTYQEALSRHSAAS.

Serine 54 is modified (phosphoserine). Lysine 211 bears the N6-acetyllysine mark.

Belongs to the mitochondrion-specific ribosomal protein mS22 family. Component of the mitochondrial small ribosomal subunit (mt-SSU). Mature mammalian 55S mitochondrial ribosomes consist of a small (28S) and a large (39S) subunit. The 28S small subunit contains a 12S ribosomal RNA (12S mt-rRNA) and 30 different proteins. The 39S large subunit contains a 16S rRNA (16S mt-rRNA), a copy of mitochondrial valine transfer RNA (mt-tRNA(Val)), which plays an integral structural role, and 52 different proteins.

The protein localises to the mitochondrion. The chain is Small ribosomal subunit protein mS22 (MRPS22) from Homo sapiens (Human).